The following is a 152-amino-acid chain: uncharacterized protein (152 aa).

The N-linked (GlcNAc...) asparagine; by host glycan is linked to N2. 3 helical membrane-spanning segments follow: residues 5–25, 36–56, and 68–88; these read MILL…MNLW, LNDF…CYIL, and LIIT…QAFI. An N-linked (GlcNAc...) asparagine; by host glycan is attached at N113.

Its subcellular location is the membrane. This is an uncharacterized protein from Acanthamoeba polyphaga mimivirus (APMV).